Here is a 1134-residue protein sequence, read N- to C-terminus: DNA polymerase II large subunit (1134 aa).

It belongs to the archaeal DNA polymerase II family. As to quaternary structure, heterodimer of a large subunit and a small subunit.

The catalysed reaction is DNA(n) + a 2'-deoxyribonucleoside 5'-triphosphate = DNA(n+1) + diphosphate. It catalyses the reaction Exonucleolytic cleavage in the 3'- to 5'-direction to yield nucleoside 5'-phosphates.. In terms of biological role, possesses two activities: a DNA synthesis (polymerase) and an exonucleolytic activity that degrades single-stranded DNA in the 3'- to 5'-direction. Has a template-primer preference which is characteristic of a replicative DNA polymerase. The polypeptide is DNA polymerase II large subunit (Methanocella arvoryzae (strain DSM 22066 / NBRC 105507 / MRE50)).